Consider the following 300-residue polypeptide: ETS homologous factor (300 aa).

Positions Ser-29–Gly-115 constitute a PNT domain. Residues Glu-183–His-202 are disordered. Positions Pro-185 to Ala-195 are enriched in basic and acidic residues. The ETS DNA-binding region spans Thr-207–Gly-289.

Belongs to the ETS family.

It is found in the nucleus. Transcriptional activator that may play a role in regulating epithelial cell differentiation and proliferation. May act as a repressor for a specific subset of ETS/AP-1-responsive genes, and as a modulator of the nuclear response to mitogen-activated protein kinase signaling cascades. Binds to DNA sequences containing the consensus nucleotide core sequence GGAA. Involved in regulation of TNFRSF10B/DR5 expression through Ets-binding sequences on the TNFRSF10B/DR5 promoter. The chain is ETS homologous factor (EHF) from Pan troglodytes (Chimpanzee).